The following is a 546-amino-acid chain: Probable protein kinase UbiB (546 aa).

The Protein kinase domain occupies 123–501; the sequence is DFDETPLASA…SRRQGQARYL (379 aa). ATP is bound by residues 129 to 137 and lysine 152; that span reads LASASIAQV. Aspartate 287 serves as the catalytic Proton acceptor. The next 2 helical transmembrane spans lie at 496 to 516 and 521 to 541; these read GQAR…VFLL and HIEW…LGWF.

It belongs to the ABC1 family. UbiB subfamily.

It localises to the cell inner membrane. The protein operates within cofactor biosynthesis; ubiquinone biosynthesis [regulation]. Its function is as follows. Is probably a protein kinase regulator of UbiI activity which is involved in aerobic coenzyme Q (ubiquinone) biosynthesis. The polypeptide is Probable protein kinase UbiB (Aeromonas salmonicida (strain A449)).